A 75-amino-acid chain; its full sequence is Protein TM_1420 (75 aa).

4 residues coordinate [2Fe-2S] cluster: cysteine 6, cysteine 11, cysteine 39, and cysteine 43.

[2Fe-2S] cluster is required as a cofactor.

In terms of biological role, might be part of a multi-protein complex, possibly involved in metal cluster assembly. The polypeptide is Protein TM_1420 (Thermotoga maritima (strain ATCC 43589 / DSM 3109 / JCM 10099 / NBRC 100826 / MSB8)).